The following is a 353-amino-acid chain: Photosystem II protein D1 (353 aa).

At Thr-2 the chain carries N-acetylthreonine. A Phosphothreonine modification is found at Thr-2. A run of 3 helical transmembrane segments spans residues 29–46 (YIGW…TATS), 118–133 (HFLL…EWEL), and 142–156 (WIAV…AATA). His-118 is a chlorophyll a binding site. A pheophytin a-binding site is contributed by Tyr-126. Residues Asp-170 and Glu-189 each contribute to the [CaMn4O5] cluster site. Residues 197-218 (FHMLGVAGVFGGSLFSAMHGSL) form a helical membrane-spanning segment. A chlorophyll a-binding site is contributed by His-198. Residues His-215 and 264–265 (SF) contribute to the a quinone site. Fe cation is bound at residue His-215. His-272 is a binding site for Fe cation. Residues 274 to 288 (FLAAWPVVGIWFTAL) form a helical membrane-spanning segment. Positions 332, 333, 342, and 344 each coordinate [CaMn4O5] cluster. Residues 345-353 (SVEAPSINA) constitute a propeptide that is removed on maturation.

Belongs to the reaction center PufL/M/PsbA/D family. As to quaternary structure, PSII is composed of 1 copy each of membrane proteins PsbA, PsbB, PsbC, PsbD, PsbE, PsbF, PsbH, PsbI, PsbJ, PsbK, PsbL, PsbM, PsbT, PsbX, PsbY, PsbZ, Psb30/Ycf12, at least 3 peripheral proteins of the oxygen-evolving complex and a large number of cofactors. It forms dimeric complexes. The cofactor is The D1/D2 heterodimer binds P680, chlorophylls that are the primary electron donor of PSII, and subsequent electron acceptors. It shares a non-heme iron and each subunit binds pheophytin, quinone, additional chlorophylls, carotenoids and lipids. D1 provides most of the ligands for the Mn4-Ca-O5 cluster of the oxygen-evolving complex (OEC). There is also a Cl(-1) ion associated with D1 and D2, which is required for oxygen evolution. The PSII complex binds additional chlorophylls, carotenoids and specific lipids.. Tyr-161 forms a radical intermediate that is referred to as redox-active TyrZ, YZ or Y-Z. In terms of processing, C-terminally processed by CTPA; processing is essential to allow assembly of the oxygen-evolving complex and thus photosynthetic growth.

Its subcellular location is the plastid. It is found in the chloroplast thylakoid membrane. The catalysed reaction is 2 a plastoquinone + 4 hnu + 2 H2O = 2 a plastoquinol + O2. Functionally, photosystem II (PSII) is a light-driven water:plastoquinone oxidoreductase that uses light energy to abstract electrons from H(2)O, generating O(2) and a proton gradient subsequently used for ATP formation. It consists of a core antenna complex that captures photons, and an electron transfer chain that converts photonic excitation into a charge separation. The D1/D2 (PsbA/PsbD) reaction center heterodimer binds P680, the primary electron donor of PSII as well as several subsequent electron acceptors. In Chara vulgaris (Common stonewort), this protein is Photosystem II protein D1.